The chain runs to 463 residues: MAGAGERKGKKDDNGIGTAIDFVLSNARLVLGVGGAAMLGIATLAVKRMYDRAISAPTSPTRLSHSGKRSWEEPNWMGSPRLLNRDMKTGLSRSLQTLPTDSSAFDTDTFCPPRPKPLARRGQVDLKKSRLRMSLQEKLLSYYRNRAAIPAGEQARAKQAAVDICAELRSFLRAKLPDMPLRDMYLSGSLYDDLQVVTADHIQLIVPLVLEQNLWSCIPGEDTIMNIPGFFLVRRENPEYFPRGSSYWDRCVVGGYLSPKTVADTFEKVVAGSINWPAIGSLLDYVIRPAPPPEALTLEVQYERDKHLVIDFLPSVTLGDTVLVARPHRLAQYDNLWRLSLRPAETARLRALDQADSGCRSLCLKILKAICKSTPALGHLTASQLTNVILHLSQEEADWSPDMLADRFLQALRGLISYLEAGVLPSALNPKVNLFAELTPHEIDELGYTLYCSLSEPEVLLQT.

Over 1–23 (MAGAGERKGKKDDNGIGTAIDFV) the chain is Mitochondrial intermembrane. The chain crosses the membrane as a helical span at residues 24-46 (LSNARLVLGVGGAAMLGIATLAV). Over 47–463 (KRMYDRAISA…LSEPEVLLQT (417 aa)) the chain is Cytoplasmic. Residues 49-195 (MYDRAISAPT…LSGSLYDDLQ (147 aa)) form a dimerization region. Phosphoserine is present on residues serine 55, serine 59, serine 79, and serine 94. The disordered stretch occupies residues 57–77 (PTSPTRLSHSGKRSWEEPNWM). The interval 160–169 (AAVDICAELR) is important for interaction with DNM1L. ADP-binding residues include serine 187, serine 189, and histidine 201. Residues 234–243 (RRENPEYFPR) are important for interaction with DNM1L. The ADP site is built by serine 340, arginine 342, and lysine 368.

It belongs to the MID49/MID51 family. In terms of assembly, homodimer. Interacts with DNM1L.

Its subcellular location is the mitochondrion outer membrane. Mitochondrial outer membrane protein which regulates mitochondrial fission/fusion dynamics. Promotes the recruitment and association of the fission mediator dynamin-related protein 1 (DNM1L) to the mitochondrial surface independently of the mitochondrial fission FIS1 and MFF proteins. Regulates DNM1L GTPase activity and DNM1L oligomerization. Binds ADP and can also bind GDP, although with lower affinity. Does not bind CDP, UDP, ATP, AMP or GTP. Inhibits DNM1L GTPase activity in the absence of bound ADP. Requires ADP to stimulate DNM1L GTPase activity and the assembly of DNM1L into long, oligomeric tubules with a spiral pattern, as opposed to the ring-like DNM1L oligomers observed in the absence of bound ADP. Does not require ADP for its function in recruiting DNM1L. The polypeptide is Mitochondrial dynamics protein MID51 (Mief1) (Rattus norvegicus (Rat)).